Reading from the N-terminus, the 1288-residue chain is Probable serine/threonine-protein kinase drkD (1288 aa).

Residues 1-12 (MEGSFQFNKSKQ) show a composition bias toward polar residues. Disordered regions lie at residues 1–132 (MEGS…QYHP), 156–223 (FNVS…PEEI), and 269–386 (SFGH…DDEE). 2 stretches are compositionally biased toward low complexity: residues 13 to 79 (TNNN…NSTS) and 156 to 220 (FNVS…QQQP). The stretch at 221–248 (EEIEGELNRERQERDKMLHEEAEIEQYK) forms a coiled coil. Positions 271 to 291 (GHITSANSDETTNNESGSPIN) are enriched in polar residues. The segment covering 302 to 343 (PHSSHNEDHQSDQDNHGQFMNDEHQSTDDDQNKSDNEKESES) has biased composition (basic and acidic residues). Polar residues predominate over residues 344 to 354 (ARNSGDLQQKV). Over residues 376–386 (EGEEEDDDDEE) the composition is skewed to acidic residues. LRR repeat units follow at residues 400-421 (KSTK…VWSI), 423-444 (ELRD…IGLL), 446-468 (HLKR…YSLP), 469-490 (RLTT…INRL), 492-513 (SLKT…TNLH), 517-538 (NLVE…MLES), and 540-561 (HLQV…LKKS). Disordered stretches follow at residues 690-717 (WDQQ…VLTG), 733-764 (PTQQ…QQQQ), and 796-825 (QQQQ…KDHQ). Polar residues-rich tracts occupy residues 701-717 (SPNV…VLTG) and 733-757 (PTQQ…HNNN). Positions 851-1104 (IAIGARIGRG…EILPIMEGMI (254 aa)) constitute a Protein kinase domain. ATP contacts are provided by residues 857 to 865 (IGRGGYGQV) and lysine 878. The Proton acceptor role is filled by aspartate 974. Disordered stretches follow at residues 1118–1141 (GRPI…QNMA) and 1245–1288 (QQQL…NDKK). The span at 1257–1268 (NRLNYNFNNSNN) shows a compositional bias: low complexity. The segment covering 1269 to 1282 (SDIQPMQQENNYRM) has biased composition (polar residues).

Belongs to the protein kinase superfamily. TKL Ser/Thr protein kinase family.

The enzyme catalyses L-seryl-[protein] + ATP = O-phospho-L-seryl-[protein] + ADP + H(+). It catalyses the reaction L-threonyl-[protein] + ATP = O-phospho-L-threonyl-[protein] + ADP + H(+). This is Probable serine/threonine-protein kinase drkD (drkD) from Dictyostelium discoideum (Social amoeba).